Reading from the N-terminus, the 425-residue chain is Zinc finger protein 789 (425 aa).

Residues 11–82 enclose the KRAB domain; it reads LSFEDVAMYF…DLPRTGNRKA (72 aa). 8 consecutive C2H2-type zinc fingers follow at residues 201-223, 229-251, 257-279, 285-307, 313-335, 341-363, 369-391, and 397-419; these read YECSECGKVIRRKAWFDQHQRIH, FECKVCGQAFRQRSALTVHKQCH, YRCHDCGKCFRQLAYLVEHKRIH, YKCSKCEKTFSQNSTLIRHQVIH, HKCLECGKAFGRHSTLLCHQQIH, HKCSECGQSFGRNVDLIQHQRIH, FQCGECGKTFSFKRNLFRHQVIH, and YQCVICGKSFKWHTSFIKHQGTH.

The protein belongs to the krueppel C2H2-type zinc-finger protein family.

It is found in the nucleus. In terms of biological role, may be involved in transcriptional regulation. The polypeptide is Zinc finger protein 789 (ZNF789) (Homo sapiens (Human)).